Consider the following 171-residue polypeptide: NADH-quinone oxidoreductase subunit B 2 (171 aa).

Residues C37, C38, C102, and C132 each coordinate [4Fe-4S] cluster.

It belongs to the complex I 20 kDa subunit family. As to quaternary structure, NDH-1 is composed of 14 different subunits. Subunits NuoB, C, D, E, F, and G constitute the peripheral sector of the complex. [4Fe-4S] cluster serves as cofactor.

It localises to the cell inner membrane. The catalysed reaction is a quinone + NADH + 5 H(+)(in) = a quinol + NAD(+) + 4 H(+)(out). In terms of biological role, NDH-1 shuttles electrons from NADH, via FMN and iron-sulfur (Fe-S) centers, to quinones in the respiratory chain. Couples the redox reaction to proton translocation (for every two electrons transferred, four hydrogen ions are translocated across the cytoplasmic membrane), and thus conserves the redox energy in a proton gradient. The sequence is that of NADH-quinone oxidoreductase subunit B 2 from Chromobacterium violaceum (strain ATCC 12472 / DSM 30191 / JCM 1249 / CCUG 213 / NBRC 12614 / NCIMB 9131 / NCTC 9757 / MK).